We begin with the raw amino-acid sequence, 277 residues long: Putative phosphoenolpyruvate synthase regulatory protein (277 aa).

157 to 164 (GVSRCGKT) contacts ADP.

This sequence belongs to the pyruvate, phosphate/water dikinase regulatory protein family. PSRP subfamily.

It catalyses the reaction [pyruvate, water dikinase] + ADP = [pyruvate, water dikinase]-phosphate + AMP + H(+). The enzyme catalyses [pyruvate, water dikinase]-phosphate + phosphate + H(+) = [pyruvate, water dikinase] + diphosphate. In terms of biological role, bifunctional serine/threonine kinase and phosphorylase involved in the regulation of the phosphoenolpyruvate synthase (PEPS) by catalyzing its phosphorylation/dephosphorylation. The polypeptide is Putative phosphoenolpyruvate synthase regulatory protein (Photobacterium profundum (strain SS9)).